A 64-amino-acid polypeptide reads, in one-letter code: MNILKTIRFISQSSMTSWFLQTCYRRGICRRCYTPLGSYMIFGIVHYFCSYHIGIGTHDLHFGS.

Residues 33-55 (YTPLGSYMIFGIVHYFCSYHIGI) traverse the membrane as a helical segment.

The protein resides in the membrane. This is an uncharacterized protein from Saccharomyces cerevisiae (strain ATCC 204508 / S288c) (Baker's yeast).